The following is a 234-amino-acid chain: MSSASMFGSLKTNAVDESQLKARIGVLALQGAFIEHINIMNSIDGVISFPVKTAKDCENIDGLIIPGGESTTIGKLINIDEKLRDRLEHLVDQGLPIWGTCAGMILLSKKSRGGKFPDPYLLRAMDIEVTRNYFGPQTMSFTTDITVTESMQFEATEPLHSFSATFIRAPVASTILSDDINVLATIVHEGNKEIVAVEQGPFLGTSFHPELTADNRWHEWWVKERVLPLKEKKD.

Residue 68–70 (GES) coordinates L-glutamine. Cys101 serves as the catalytic Nucleophile. Residues Arg131 and 167–168 (IR) contribute to the L-glutamine site. Residues His208 and Glu210 each act as charge relay system in the active site.

This sequence belongs to the glutaminase PdxT/SNO family.

The protein resides in the cytoplasm. The catalysed reaction is L-glutamine + H2O = L-glutamate + NH4(+). This is an uncharacterized protein from Schizosaccharomyces pombe (strain 972 / ATCC 24843) (Fission yeast).